The primary structure comprises 495 residues: Cobyric acid synthase (495 aa).

The GATase cobBQ-type domain occupies 252–440 (RPKVVVLAYP…VHGLFADDGL (189 aa)). Catalysis depends on Cys334, which acts as the Nucleophile. His432 is a catalytic residue.

Belongs to the CobB/CobQ family. CobQ subfamily.

Its pathway is cofactor biosynthesis; adenosylcobalamin biosynthesis. Functionally, catalyzes amidations at positions B, D, E, and G on adenosylcobyrinic A,C-diamide. NH(2) groups are provided by glutamine, and one molecule of ATP is hydrogenolyzed for each amidation. The protein is Cobyric acid synthase of Bradyrhizobium sp. (strain ORS 278).